We begin with the raw amino-acid sequence, 216 residues long: Peptide methionine sulfoxide reductase MsrA (216 aa).

Cys-54 is an active-site residue.

This sequence belongs to the MsrA Met sulfoxide reductase family.

It catalyses the reaction L-methionyl-[protein] + [thioredoxin]-disulfide + H2O = L-methionyl-(S)-S-oxide-[protein] + [thioredoxin]-dithiol. The enzyme catalyses [thioredoxin]-disulfide + L-methionine + H2O = L-methionine (S)-S-oxide + [thioredoxin]-dithiol. Functionally, has an important function as a repair enzyme for proteins that have been inactivated by oxidation. Catalyzes the reversible oxidation-reduction of methionine sulfoxide in proteins to methionine. The protein is Peptide methionine sulfoxide reductase MsrA of Xanthomonas campestris pv. campestris (strain ATCC 33913 / DSM 3586 / NCPPB 528 / LMG 568 / P 25).